We begin with the raw amino-acid sequence, 147 residues long: Nucleoside diphosphate kinase (147 aa).

Residues K9, F57, R85, T91, R102, and N112 each coordinate ATP. T91 is modified (phosphothreonine). The active-site Pros-phosphohistidine intermediate is the H115. Phosphoserine is present on S122.

It belongs to the NDK family. Homotetramer. Mg(2+) is required as a cofactor.

The protein resides in the cytoplasm. It carries out the reaction a 2'-deoxyribonucleoside 5'-diphosphate + ATP = a 2'-deoxyribonucleoside 5'-triphosphate + ADP. It catalyses the reaction a ribonucleoside 5'-diphosphate + ATP = a ribonucleoside 5'-triphosphate + ADP. In terms of biological role, major role in the synthesis of nucleoside triphosphates other than ATP. The ATP gamma phosphate is transferred to the NDP beta phosphate via a ping-pong mechanism, using a phosphorylated active-site intermediate. This is Nucleoside diphosphate kinase from Halalkalibacterium halodurans (strain ATCC BAA-125 / DSM 18197 / FERM 7344 / JCM 9153 / C-125) (Bacillus halodurans).